Here is a 955-residue protein sequence, read N- to C-terminus: E3 ubiquitin-protein ligase MIB2 (955 aa).

Met-1 carries the N-acetylmethionine modification. The region spanning 1–80 (MDPDPQAGVQ…AHDLLLYDNA (80 aa)) is the MIB/HERC2 1 domain. Residues 86–138 (HPNIICDCCKKHGLRGMRWKCRVCLDYDLCTQCYMHNKHELAHAFDRYETAHS) form a ZZ-type zinc finger. Zn(2+) is bound by residues Cys-91, Cys-94, Cys-106, Cys-109, Cys-115, Cys-118, His-124, and His-128. The MIB/HERC2 2 domain occupies 149 to 227 (LPRIPLRGIF…KVDLKCVGEA (79 aa)). Position 251 is a phosphoserine (Ser-251). 9 ANK repeats span residues 464-493 (QGRT…GVDL), 497-526 (EGNT…RADA), 530-559 (TQST…DVNL), 563-595 (HSDT…DVTA), 599-628 (QGFT…QLVD), 633-663 (DGFT…DVNV), 667-696 (KLQS…SVNA), 700-728 (EGDT…DPGP), and 769-798 (RGRS…ERQA). 2 consecutive RING-type zinc fingers follow at residues 832 to 867 (CLVC…IRCQ) and 911 to 944 (CPIC…PICR).

Interacts with actin monomer. Ubiquitinated. Possibly via autoubiquitination. In terms of tissue distribution, expressed in skeletal muscle, and to a lesser extent in heart, brain and kidney.

Its subcellular location is the cytoplasm. It is found in the endosome. The enzyme catalyses S-ubiquitinyl-[E2 ubiquitin-conjugating enzyme]-L-cysteine + [acceptor protein]-L-lysine = [E2 ubiquitin-conjugating enzyme]-L-cysteine + N(6)-ubiquitinyl-[acceptor protein]-L-lysine.. It participates in protein modification; protein ubiquitination. Functionally, E3 ubiquitin-protein ligase that mediates ubiquitination of Delta receptors, which act as ligands of Notch proteins. Positively regulates the Delta-mediated Notch signaling by ubiquitinating the intracellular domain of Delta, leading to endocytosis of Delta receptors. This Homo sapiens (Human) protein is E3 ubiquitin-protein ligase MIB2.